Here is a 410-residue protein sequence, read N- to C-terminus: Adenosine receptor A2a (410 aa).

The Extracellular portion of the chain corresponds to 1-4; that stretch reads MGSS. The helical transmembrane segment at 5-29 threads the bilayer; sequence VYIMVELAIAVLAILGNVLVCWAVW. Over 30–39 the chain is Cytoplasmic; that stretch reads INSNLQNVTN. Residues 40-63 traverse the membrane as a helical segment; that stretch reads FFVVSLAAADIAVGVLAIPFAITI. The Extracellular portion of the chain corresponds to 64–74; that stretch reads STGFCAACHGC. 3 disulfides stabilise this stretch: Cys-68-Cys-154, Cys-71-Cys-143, and Cys-74-Cys-161. Residues 75–97 form a helical membrane-spanning segment; that stretch reads LFFACFVLVLTQSSIFSLLAIAI. Residues 98-117 are Cytoplasmic-facing; the sequence is DRYIAIRIPLRYNGLVTGMR. Residues 118–140 traverse the membrane as a helical segment; sequence AKGIIAICWVLSFAIGLTPMLGW. Over 141-168 the chain is Extracellular; sequence NNCSQKDENSTKTCGEGRVTCLFEDVVP. Asn-142 and Asn-149 each carry an N-linked (GlcNAc...) asparagine glycan. Glu-164 is an adenosine binding site. The helical transmembrane segment at 169 to 193 threads the bilayer; that stretch reads MNYMVYYNFFAFVLLPLLLMLAIYL. Topologically, residues 194–229 are cytoplasmic; the sequence is RIFLAARRQLKQMESQPLPGERTRSTLQKEVHAAKS. A helical transmembrane segment spans residues 230 to 253; sequence LAIIVGLFALCWLPLHIINCFTFF. An adenosine-binding site is contributed by Asn-248. The cysteines at positions 254 and 257 are disulfide-linked. Residues 254–261 are Extracellular-facing; the sequence is CSTCQHAP. Residues 262–285 traverse the membrane as a helical segment; that stretch reads PWLMYLAIILSHSNSVVNPFIYAY. Positions 272 and 273 each coordinate adenosine. The Cytoplasmic segment spans residues 286 to 410; sequence RIREFRQTFR…ASWSSEFAPS (125 aa). An interaction with GAS2L2 region spans residues 322–410; sequence HSTEGEQVSL…ASWSSEFAPS (89 aa). The interval 342-410 is disordered; it reads ANGSAPHSGR…ASWSSEFAPS (69 aa). The segment covering 377-389 has biased composition (basic and acidic residues); it reads TQEHQEGQEHPGL. The segment covering 401–410 has biased composition (polar residues); that stretch reads ASWSSEFAPS.

Belongs to the G-protein coupled receptor 1 family. As to quaternary structure, interacts (via cytoplasmic C-terminal domain) with USP4; the interaction is direct. May interact with DRD4. Interacts with NECAB2. Interacts (via cytoplasmic C-terminal domain) with GAS2L2; interaction enhances receptor-mediated adenylyl cyclase activity. Ubiquitinated. Deubiquitinated by USP4; leading to stabilization and expression at the cell surface.

Its subcellular location is the cell membrane. Its function is as follows. Receptor for adenosine. The activity of this receptor is mediated by G proteins which activate adenylyl cyclase. The protein is Adenosine receptor A2a (Adora2a) of Mus musculus (Mouse).